The sequence spans 338 residues: Malate dehydrogenase, mitochondrial (338 aa).

A mitochondrion-targeting transit peptide spans 1–24; that stretch reads MLSALARPAGAALRRSFSTSAQNN. NAD(+) contacts are provided by residues 31 to 37 and aspartate 57; that span reads GASGGIG. O-linked (GalNAc...) serine glycosylation is present at serine 33. N6-acetyllysine; alternate is present on residues lysine 78 and lysine 91. Lysine 78 and lysine 91 each carry N6-succinyllysine; alternate. Residues arginine 104 and arginine 110 each coordinate substrate. NAD(+)-binding positions include asparagine 117 and 140–142; that span reads ISN. A substrate-binding site is contributed by asparagine 142. At lysine 165 the chain carries N6-acetyllysine. The Proton relay role is filled by aspartate 173. Arginine 176 contacts substrate. N6-acetyllysine; alternate is present on lysine 185. At lysine 185 the chain carries N6-succinyllysine; alternate. Catalysis depends on histidine 200, which acts as the Proton acceptor. N6-succinyllysine is present on lysine 203. Lysine 215 and lysine 239 each carry N6-acetyllysine; alternate. Lysine 215 and lysine 239 each carry N6-succinyllysine; alternate. At lysine 239 the chain carries N6-malonyllysine; alternate. Serine 246 is modified (phosphoserine). Methionine 251 is an NAD(+) binding site. The residue at position 269 (lysine 269) is an N6-succinyllysine. An N6-acetyllysine; alternate mark is found at lysine 296, lysine 301, lysine 307, lysine 314, and lysine 324. N6-succinyllysine; alternate is present on residues lysine 296, lysine 301, lysine 307, lysine 314, and lysine 324. Lysine 307 is subject to N6-malonyllysine; alternate. Serine 326 carries the post-translational modification Phosphoserine. 3 positions are modified to N6-acetyllysine; alternate: lysine 328, lysine 329, and lysine 335. Position 328 is an N6-succinyllysine; alternate (lysine 328). The residue at position 329 (lysine 329) is an N6-malonyllysine; alternate. The residue at position 335 (lysine 335) is an N6-succinyllysine; alternate.

This sequence belongs to the LDH/MDH superfamily. MDH type 1 family. In terms of assembly, homodimer. Acetylation is enhanced after treatment either with trichostin A (TSA) or with nicotinamide (NAM) with the appearance of tri- and tetraacetylations. Glucose also increases acetylation. In terms of tissue distribution, ubiquitously expressed. Highly expressed in skeletal muscle and heart. Also expressed in liver, ileum, colon, kidney and adipose tissue, and at very low levels in lung, pancreas, stomach and spleen.

Its subcellular location is the mitochondrion matrix. The catalysed reaction is (S)-malate + NAD(+) = oxaloacetate + NADH + H(+). With respect to regulation, enzyme activity is enhanced by acetylation. The polypeptide is Malate dehydrogenase, mitochondrial (Felis catus (Cat)).